Reading from the N-terminus, the 271-residue chain is Bifunctional protein FolD (271 aa).

Residues 154–156, Ser-181, and Ile-222 each bind NADP(+); that span reads GRS.

The protein belongs to the tetrahydrofolate dehydrogenase/cyclohydrolase family. As to quaternary structure, homodimer.

The enzyme catalyses (6R)-5,10-methylene-5,6,7,8-tetrahydrofolate + NADP(+) = (6R)-5,10-methenyltetrahydrofolate + NADPH. It catalyses the reaction (6R)-5,10-methenyltetrahydrofolate + H2O = (6R)-10-formyltetrahydrofolate + H(+). Its pathway is one-carbon metabolism; tetrahydrofolate interconversion. In terms of biological role, catalyzes the oxidation of 5,10-methylenetetrahydrofolate to 5,10-methenyltetrahydrofolate and then the hydrolysis of 5,10-methenyltetrahydrofolate to 10-formyltetrahydrofolate. The protein is Bifunctional protein FolD of Thermotoga sp. (strain RQ2).